The following is a 366-amino-acid chain: Adenine DNA glycosylase (366 aa).

Residue 30–31 (WR) coordinates DNA. Catalysis depends on Glu43, which acts as the Proton donor/acceptor. Residues 48–49 (QT), 86–88 (LGY), Tyr126, and Glu188 contribute to the DNA site. Residues 105 to 133 (RYGGKVPDDPDEFSRLKGVGPYTVGAVLS) enclose the HhH domain. Residues Cys198, Cys205, Cys208, and Cys214 each contribute to the [4Fe-4S] cluster site. Ser308 is a binding site for DNA.

The protein belongs to the Nth/MutY family. Requires [4Fe-4S] cluster as cofactor.

The enzyme catalyses Hydrolyzes free adenine bases from 7,8-dihydro-8-oxoguanine:adenine mismatched double-stranded DNA, leaving an apurinic site.. Base excision repair (BER) glycosylase that initiates repair of A:oxoG to C:G by removing the inappropriately paired adenine base from the DNA backbone, generating an abasic site product. 8-oxoguanine (oxoG) is a genotoxic DNA lesion resulting from oxidation of guanine; this residue is misread by replicative DNA polymerases, that insert adenine instead of cytosine opposite the oxidized damaged base. Shows a powerful dicrimination of A versus C, since it does not cleave cytosine in oxoG:C pairs. May also be able to remove adenine from A:G mispairs, although this activity may not be physiologically relevant. The polypeptide is Adenine DNA glycosylase (Geobacillus stearothermophilus (Bacillus stearothermophilus)).